The primary structure comprises 745 residues: Junction plakoglobin (745 aa).

Residue Met-1 is modified to N-acetylmethionine. The O-linked (GlcNAc) threonine glycan is linked to Thr-14. Residues Ser-99 and Ser-125 each carry the phosphoserine modification. 12 ARM repeats span residues 132-171 (NYQD…QLSK), 172-215 (KEAS…LSHH), 216-255 (REGL…NLLL), 258-297 (EGAK…LLAY), 298-341 (GNQE…LSVC), 342-381 (PSNK…NLSD), 383-420 (ATKQ…NLTC), 423-464 (SKNK…HLTS), 470-510 (EMAQ…NLAL), 512-551 (PANH…QPYT), 574-613 (PMNR…ELAQ), and 615-661 (KEAA…PDYR). The tract at residues 132–297 (NYQDDAELAT…TTDCLQLLAY (166 aa)) is interaction with DSC1 and DSG1. Ser-182 is subject to Phosphoserine. The tract at residues 574–661 (PMNRMEIFRL…ISEDKNPDYR (88 aa)) is interaction with DSC1. A phosphoserine mark is found at Ser-665 and Ser-730.

This sequence belongs to the beta-catenin family. As to quaternary structure, homodimer. Component of an E-cadherin/catenin adhesion complex composed of at least E-cadherin/CDH1 and gamma-catenin/JUP, and possibly alpha-catenin/CTNNA1; the complex is located to adherens junctions. The stable association of CTNNA1 is controversial as CTNNA1 was shown not to bind to F-actin when assembled in the complex. Interacts with MUC1. Interacts with CAV1. Interacts with PTPRJ. Interacts with DSG1. Interacts with DSC1 and DSC2. Interacts with PKP2. Interacts with PKP3 (via N-terminus); the interaction is required for PKP3 localization to desmosome cell-cell junctions. Interacts with DSG4. Post-translationally, may be phosphorylated by FER.

The protein localises to the cell junction. It localises to the adherens junction. Its subcellular location is the desmosome. It is found in the cytoplasm. The protein resides in the cytoskeleton. The protein localises to the cell membrane. It localises to the nucleus. Its function is as follows. Common junctional plaque protein. The membrane-associated plaques are architectural elements in an important strategic position to influence the arrangement and function of both the cytoskeleton and the cells within the tissue. The presence of plakoglobin in both the desmosomes and in the intermediate junctions suggests that it plays a central role in the structure and function of submembranous plaques. Acts as a substrate for VE-PTP and is required by it to stimulate VE-cadherin function in endothelial cells. Can replace beta-catenin in E-cadherin/catenin adhesion complexes which are proposed to couple cadherins to the actin cytoskeleton. This chain is Junction plakoglobin, found in Bos taurus (Bovine).